Reading from the N-terminus, the 98-residue chain is Feather beta keratin (98 aa).

N-acetylserine is present on serine 2.

It belongs to the avian keratin family. The avian keratins (F-ker, S-ker, C-ker and B-ker) are a complex mixture of very similar polypeptides.

This is Feather beta keratin from Mycteria americana (Wood stork).